Reading from the N-terminus, the 179-residue chain is Large ribosomal subunit protein uL6 (179 aa).

The protein belongs to the universal ribosomal protein uL6 family. In terms of assembly, part of the 50S ribosomal subunit.

In terms of biological role, this protein binds to the 23S rRNA, and is important in its secondary structure. It is located near the subunit interface in the base of the L7/L12 stalk, and near the tRNA binding site of the peptidyltransferase center. This Bacillus subtilis (strain 168) protein is Large ribosomal subunit protein uL6.